A 462-amino-acid chain; its full sequence is Putative E3 ubiquitin-protein ligase XBAT35 (462 aa).

ANK repeat units lie at residues 6-35, 39-69, and 75-104; these read SKGELLYQQVSYGNSEGIRALHRDGGDLEW, EGKTPLILACMNSELFDVAKTLIELGSNVNA, and HAGTPLHHAAKRGLENTVKLLLSHGANPLV. Disordered stretches follow at residues 277-341 and 356-402; these read HPPV…GKAS and SSPS…EGER. Residues 304-317 are compositionally biased toward polar residues; it reads SLHTTMSDPSNLNH. Over residues 319 to 341 the composition is skewed to low complexity; that stretch reads SIGQASSSSGPSSSTAPPSGKAS. Residues 411 to 450 form an RING-type zinc finger; it reads CAICLDAPSEAVCVPCGHVAGCMSCLKEIKSKNWGCPVCR.

It catalyses the reaction S-ubiquitinyl-[E2 ubiquitin-conjugating enzyme]-L-cysteine + [acceptor protein]-L-lysine = [E2 ubiquitin-conjugating enzyme]-L-cysteine + N(6)-ubiquitinyl-[acceptor protein]-L-lysine.. It participates in protein modification; protein ubiquitination. Its function is as follows. No E3 ubiquitin-protein ligase activity observed when associated with the E2 enzyme UBC8 in vitro. The chain is Putative E3 ubiquitin-protein ligase XBAT35 (XBAT35) from Arabidopsis thaliana (Mouse-ear cress).